The following is a 355-amino-acid chain: 5-formaminoimidazole-4-carboxamide-1-(beta)-D-ribofuranosyl 5'-monophosphate synthetase (355 aa).

5-amino-1-(5-phospho-beta-D-ribosyl)imidazole-4-carboxamide-binding residues include His27 and Ser94. The 232-residue stretch at 101-332 (TESFAELAVP…YSDMIEENLS (232 aa)) folds into the ATP-grasp domain. ATP-binding positions include 144–195 (PEKI…TRYY) and Glu225. 5-amino-1-(5-phospho-beta-D-ribosyl)imidazole-4-carboxamide is bound at residue Asn254. Glu292 and Glu305 together coordinate Mg(2+).

It belongs to the phosphohexose mutase family. Mg(2+) serves as cofactor. The cofactor is Mn(2+).

It catalyses the reaction 5-amino-1-(5-phospho-beta-D-ribosyl)imidazole-4-carboxamide + formate + ATP = 5-formamido-1-(5-phospho-D-ribosyl)imidazole-4-carboxamide + ADP + phosphate. It functions in the pathway purine metabolism; IMP biosynthesis via de novo pathway; 5-formamido-1-(5-phospho-D-ribosyl)imidazole-4-carboxamide from 5-amino-1-(5-phospho-D-ribosyl)imidazole-4-carboxamide (formate route): step 1/1. Catalyzes the ATP- and formate-dependent formylation of 5-aminoimidazole-4-carboxamide-1-beta-d-ribofuranosyl 5'-monophosphate (AICAR) to 5-formaminoimidazole-4-carboxamide-1-beta-d-ribofuranosyl 5'-monophosphate (FAICAR) in the absence of folates. This Methanococcoides burtonii (strain DSM 6242 / NBRC 107633 / OCM 468 / ACE-M) protein is 5-formaminoimidazole-4-carboxamide-1-(beta)-D-ribofuranosyl 5'-monophosphate synthetase.